The chain runs to 267 residues: Ribosomal RNA small subunit methyltransferase A (267 aa).

S-adenosyl-L-methionine is bound by residues N16, L18, G43, E64, D89, and N110.

It belongs to the class I-like SAM-binding methyltransferase superfamily. rRNA adenine N(6)-methyltransferase family. RsmA subfamily.

The protein resides in the cytoplasm. The enzyme catalyses adenosine(1518)/adenosine(1519) in 16S rRNA + 4 S-adenosyl-L-methionine = N(6)-dimethyladenosine(1518)/N(6)-dimethyladenosine(1519) in 16S rRNA + 4 S-adenosyl-L-homocysteine + 4 H(+). In terms of biological role, specifically dimethylates two adjacent adenosines (A1518 and A1519) in the loop of a conserved hairpin near the 3'-end of 16S rRNA in the 30S particle. May play a critical role in biogenesis of 30S subunits. The sequence is that of Ribosomal RNA small subunit methyltransferase A from Pseudomonas putida (strain ATCC 47054 / DSM 6125 / CFBP 8728 / NCIMB 11950 / KT2440).